The primary structure comprises 187 residues: MISTSEFKKGLKIEYKGEPYEIIDFQHVKMQQRAPIVRTKIKHLKTGRVLEENFPAGEKFEKPELEEKQMQYLYSQGDSYVFMDMESYEQISIPKERIGDAIYYIKDEMIVDVIYYKGEPLVIEPPMFVELRVAETEPAFKGDTASGGTKPAKLETGLTVKVPFHIQTGDLLKIDTRTGEYIEKVKE.

It belongs to the elongation factor P family.

It localises to the cytoplasm. It functions in the pathway protein biosynthesis; polypeptide chain elongation. Involved in peptide bond synthesis. Stimulates efficient translation and peptide-bond synthesis on native or reconstituted 70S ribosomes in vitro. Probably functions indirectly by altering the affinity of the ribosome for aminoacyl-tRNA, thus increasing their reactivity as acceptors for peptidyl transferase. This Thermodesulfovibrio yellowstonii (strain ATCC 51303 / DSM 11347 / YP87) protein is Elongation factor P.